The following is a 198-amino-acid chain: 3-isopropylmalate dehydratase small subunit (198 aa).

Belongs to the LeuD family. LeuD type 1 subfamily. Heterodimer of LeuC and LeuD.

It carries out the reaction (2R,3S)-3-isopropylmalate = (2S)-2-isopropylmalate. It functions in the pathway amino-acid biosynthesis; L-leucine biosynthesis; L-leucine from 3-methyl-2-oxobutanoate: step 2/4. In terms of biological role, catalyzes the isomerization between 2-isopropylmalate and 3-isopropylmalate, via the formation of 2-isopropylmaleate. The protein is 3-isopropylmalate dehydratase small subunit of Colwellia psychrerythraea (strain 34H / ATCC BAA-681) (Vibrio psychroerythus).